We begin with the raw amino-acid sequence, 242 residues long: Ferritin, mitochondrial (242 aa).

The N-terminal 49 residues, 1 to 49 (MLPCSLFLPKHISTSLVFLRSARHGFALLPRWVPRLSSDYPPAAPIRLL), are a transit peptide targeting the mitochondrion. Residues 70–219 (QNFHPDSEAA…DHVNNLVKMG (150 aa)) form the Ferritin-like diiron domain. Fe cation is bound by residues glutamate 87, glutamate 122, histidine 125, glutamate 167, and glutamine 201.

The protein belongs to the ferritin family. Homooligomer of 24 subunits. The functional molecule is roughly spherical and contains a central cavity into which the polymeric mineral iron core is deposited.

Its subcellular location is the mitochondrion. It catalyses the reaction 4 Fe(2+) + O2 + 4 H(+) = 4 Fe(3+) + 2 H2O. Its function is as follows. Catalyzes the oxidation of ferrous iron(II) to ferric iron(III) and stores iron in a soluble, non-toxic, readily available form. Important for iron homeostasis. Iron is taken up in the ferrous form and deposited as ferric hydroxides after oxidation. In Bos taurus (Bovine), this protein is Ferritin, mitochondrial.